A 484-amino-acid chain; its full sequence is MTQTEKYRQLRTMIPEMRRVRRIHFVGIGGAGMGGIAEVLVNEGYQVSGSDIADNAVTERLGSLGARIFIGHGADNVSGVDVVVVSTAIKHDNPEIAAAKEKRIPIVRRAEMLAELMRYRHGVAVAGTHGKTTTTSLIASIYGQAERDPTFVIGGLLNSAGTNARLGSSRYLIAEADESDASFLHLQPMVTVVTNIEADHMDTYGGDFEKLKSTFVDFMHNLPFYGVAVVCVDDPVVRELIPRIGRQVVTYGFSDDADVQALNFVQEGHSCRFTVRRKGKDDLSLKVNLPGQHNVLNSLAAIAVATEDDIEDEAIVKALAEFQGIGRRFQHLGKFATPNGEVMLVDDYGHHPSEVLATIKAARAGWPDKRLVMAYQPHRYTRTRDLYEDFVEVLSQVDKLVLLEVYAAGETPIPGADGRALCRSIRQRGQLEPIFVASPEQLTSVLPDVLADGDLLLCQGAGNIGALSRELAATELGFAKVENN.

G127–T133 is an ATP binding site.

This sequence belongs to the MurCDEF family.

Its subcellular location is the cytoplasm. The catalysed reaction is UDP-N-acetyl-alpha-D-muramate + L-alanine + ATP = UDP-N-acetyl-alpha-D-muramoyl-L-alanine + ADP + phosphate + H(+). Its pathway is cell wall biogenesis; peptidoglycan biosynthesis. Its function is as follows. Cell wall formation. The sequence is that of UDP-N-acetylmuramate--L-alanine ligase from Shewanella amazonensis (strain ATCC BAA-1098 / SB2B).